A 187-amino-acid chain; its full sequence is RNA pyrophosphohydrolase (187 aa).

In terms of domain architecture, Nudix hydrolase spans 6 to 149 (GYRANVGIIL…KRQVYRLALT (144 aa)). The Nudix box signature appears at 38–59 (GGIKSGETPTQAMYRELAEETG).

Belongs to the Nudix hydrolase family. RppH subfamily. A divalent metal cation is required as a cofactor.

Its function is as follows. Accelerates the degradation of transcripts by removing pyrophosphate from the 5'-end of triphosphorylated RNA, leading to a more labile monophosphorylated state that can stimulate subsequent ribonuclease cleavage. In Nitrosomonas eutropha (strain DSM 101675 / C91 / Nm57), this protein is RNA pyrophosphohydrolase.